A 264-amino-acid polypeptide reads, in one-letter code: uncharacterized protein (264 aa).

Helical transmembrane passes span 1–21, 43–63, 95–115, 146–166, 181–201, and 215–235; these read MLLGLGIVVLIYSLIALSVSL, FFGVLNLLIALGVAGIINGFV, VVGLIHAGILMVLTTVALSSL, IATWTSVGIFWFLGLVLLGGL, GWLAVVVIGLTTLVVMVQPFV, and IVANTILIAILVIIVLVMFFP.

It to M.pneumoniae MPN_308 C-terminal region.

It localises to the cell membrane. This is an uncharacterized protein from Mycoplasma pneumoniae (strain ATCC 29342 / M129 / Subtype 1) (Mycoplasmoides pneumoniae).